The following is a 325-amino-acid chain: GMP reductase (325 aa).

Cys174 acts as the Thioimidate intermediate in catalysis. 203–226 (LIADGGIRTHGDIAKSIRFGASMV) provides a ligand contact to NADP(+).

The protein belongs to the IMPDH/GMPR family. GuaC type 2 subfamily.

It catalyses the reaction IMP + NH4(+) + NADP(+) = GMP + NADPH + 2 H(+). Its function is as follows. Catalyzes the irreversible NADPH-dependent deamination of GMP to IMP. It functions in the conversion of nucleobase, nucleoside and nucleotide derivatives of G to A nucleotides, and in maintaining the intracellular balance of A and G nucleotides. The chain is GMP reductase from Staphylococcus aureus (strain JH9).